A 364-amino-acid polypeptide reads, in one-letter code: Fructose-bisphosphate aldolase C-A (364 aa).

Substrate is bound by residues Arg56 and Lys147. The Proton acceptor role is filled by Glu188. Lys230 (schiff-base intermediate with dihydroxyacetone-P) is an active-site residue.

It belongs to the class I fructose-bisphosphate aldolase family. Homotetramer. Expressed specifically in Purkinje cells in the brain.

It catalyses the reaction beta-D-fructose 1,6-bisphosphate = D-glyceraldehyde 3-phosphate + dihydroxyacetone phosphate. It participates in carbohydrate degradation; glycolysis; D-glyceraldehyde 3-phosphate and glycerone phosphate from D-glucose: step 4/4. This Danio rerio (Zebrafish) protein is Fructose-bisphosphate aldolase C-A.